Here is an 84-residue protein sequence, read N- to C-terminus: Small ribosomal subunit protein bS20 (84 aa).

This sequence belongs to the bacterial ribosomal protein bS20 family.

Functionally, binds directly to 16S ribosomal RNA. The sequence is that of Small ribosomal subunit protein bS20 from Parabacteroides distasonis (strain ATCC 8503 / DSM 20701 / CIP 104284 / JCM 5825 / NCTC 11152).